The sequence spans 215 residues: Myelin protein zero-like protein 2 (215 aa).

Positions 1–26 (MYGKSPALVLPLLLSLQLTALCPTEA) are cleaved as a signal peptide. The Ig-like V-type domain occupies 27-141 (VEIYTSGALE…DGLVGTIRLS (115 aa)). Over 27–154 (VEIYTSGALE…TVPFSEIYFL (128 aa)) the chain is Extracellular. 2 N-linked (GlcNAc...) asparagine glycosylation sites follow: Asn39 and Asn118. A disulfide bond links Cys47 and Cys123. A helical membrane pass occupies residues 155 to 175 (AVAIGSACALMIIVVIVVVLF). Residues 176–215 (QHFRKKRWADRADKAEGTKSKEEEKLNQGNKVSVFVEDTD) lie on the Cytoplasmic side of the membrane. Positions 187 to 201 (ADKAEGTKSKEEEKL) are enriched in basic and acidic residues. The interval 187–215 (ADKAEGTKSKEEEKLNQGNKVSVFVEDTD) is disordered.

The protein belongs to the myelin P0 protein family. Widely expressed. Expressed in the cochlea, in Deiters' cells, possibly at contact sites with the basilar membrane. Expressed in both outer and inner auditory hair cells. In the stria vascularis, detected in the basal cell layer. Not detected in thymocytes, lymphocytes, macrophage or dendritic cells.

It is found in the membrane. Functionally, mediates homophilic cell-cell adhesion. In Mus musculus (Mouse), this protein is Myelin protein zero-like protein 2 (Mpzl2).